The following is a 358-amino-acid chain: Phospho-N-acetylmuramoyl-pentapeptide-transferase (358 aa).

10 consecutive transmembrane segments (helical) span residues 25 to 45 (RTIY…PWVI), 73 to 93 (TMGG…WADL), 97 to 117 (YVWT…TDDY), 134 to 154 (MFWQ…VAGM), 172 to 192 (YLYI…VNLT), 197 to 217 (GLAI…AYIA), 233 to 253 (GAGE…GFLW), 261 to 281 (VFMG…LAVI), 286 to 306 (MLLV…IFQV), and 335 to 355 (KIIV…ISTL).

The protein belongs to the glycosyltransferase 4 family. MraY subfamily. It depends on Mg(2+) as a cofactor.

It localises to the cell inner membrane. It catalyses the reaction UDP-N-acetyl-alpha-D-muramoyl-L-alanyl-gamma-D-glutamyl-meso-2,6-diaminopimeloyl-D-alanyl-D-alanine + di-trans,octa-cis-undecaprenyl phosphate = di-trans,octa-cis-undecaprenyl diphospho-N-acetyl-alpha-D-muramoyl-L-alanyl-D-glutamyl-meso-2,6-diaminopimeloyl-D-alanyl-D-alanine + UMP. It functions in the pathway cell wall biogenesis; peptidoglycan biosynthesis. In terms of biological role, catalyzes the initial step of the lipid cycle reactions in the biosynthesis of the cell wall peptidoglycan: transfers peptidoglycan precursor phospho-MurNAc-pentapeptide from UDP-MurNAc-pentapeptide onto the lipid carrier undecaprenyl phosphate, yielding undecaprenyl-pyrophosphoryl-MurNAc-pentapeptide, known as lipid I. The sequence is that of Phospho-N-acetylmuramoyl-pentapeptide-transferase from Geobacter sulfurreducens (strain ATCC 51573 / DSM 12127 / PCA).